We begin with the raw amino-acid sequence, 229 residues long: MKIKAPVITIDGPSGSGKGTVAGLLARKLGWCLLDSGALYRLLAFAARNHGVDLTNEEALKLLAAHLDVQFEATAAGQGQRIILEGEDVTHAIRNEQVGSGASQVASLPAVRDALLLRQRAFQEEPGLVADGRDMGTVVFPDAPLKIFLTASAEERARRRYLQLKAKGDDVSLSSLLDEICARDERDTQRAVAPLKPAHDAIQLDSTELSIEQVLERILSEIALRGIAG.

12–20 lines the ATP pocket; the sequence is GPSGSGKGT.

Belongs to the cytidylate kinase family. Type 1 subfamily.

It localises to the cytoplasm. The enzyme catalyses CMP + ATP = CDP + ADP. The catalysed reaction is dCMP + ATP = dCDP + ADP. This Pseudomonas syringae pv. syringae (strain B728a) protein is Cytidylate kinase.